A 291-amino-acid polypeptide reads, in one-letter code: Transmembrane protein 41B (291 aa).

A compositionally biased stretch (basic and acidic residues) spans Met-1–Pro-11. The interval Met-1–Pro-43 is disordered. Thr-18 carries the phosphothreonine modification. At Ser-35 the chain carries Phosphoserine. 6 consecutive transmembrane segments (helical) span residues Thr-52 to Tyr-72, Phe-109 to Ile-129, Leu-147 to Leu-169, Leu-197 to Ile-217, Pro-225 to Ile-245, and Ser-262 to Phe-282. A VTT domain; required for its function in autophagy region spans residues Gly-140 to Leu-251.

It belongs to the TMEM41 family. Interacts with VMP1. Interacts with COPA, COPB1, VDAC1 and ERLIN2. Interacts with ATG2A. Interacts with SURF4. Expressed in brain, spinal cord, kidney and first lumbar dorsal root ganglia during postnatal development. Expressed in motor neurons and proprioceptive neurons.

It is found in the endoplasmic reticulum membrane. The protein localises to the endomembrane system. The catalysed reaction is a 1,2-diacyl-sn-glycero-3-phospho-L-serine(in) = a 1,2-diacyl-sn-glycero-3-phospho-L-serine(out). It carries out the reaction cholesterol(in) = cholesterol(out). It catalyses the reaction a 1,2-diacyl-sn-glycero-3-phosphocholine(in) = a 1,2-diacyl-sn-glycero-3-phosphocholine(out). The enzyme catalyses a 1,2-diacyl-sn-glycero-3-phosphoethanolamine(in) = a 1,2-diacyl-sn-glycero-3-phosphoethanolamine(out). Its function is as follows. Phospholipid scramblase involved in lipid homeostasis and membrane dynamics processes. Has phospholipid scramblase activity toward cholesterol and phosphatidylserine, as well as phosphatidylethanolamine and phosphatidylcholine. Required for autophagosome formation: participates in early stages of autophagosome biogenesis at the endoplasmic reticulum (ER) membrane by reequilibrating the leaflets of the ER as lipids are extracted by ATG2 (ATG2A or ATG2B) to mediate autophagosome assembly. In addition to autophagy, involved in other processes in which phospholipid scramblase activity is required. Required for normal motor neuron development. In Mus musculus (Mouse), this protein is Transmembrane protein 41B.